Consider the following 846-residue polypeptide: Inactive cap-specific mRNA (nucleoside-2'-O-)-methyltransferase 1B (846 aa).

Residues 30–50 (DDEDDFVDDPSPTEQKTKAEK) are disordered. Positions 44 to 90 (QKTKAEKKMERMGYKAGEGLGKNKQGIQEPIAISFREGKAGLGHEQW) constitute a G-patch domain. Residues 184–413 (FFLNRSAMKT…ERFVVCKGLR (230 aa)) enclose the RrmJ-type SAM-dependent 2'-O-MTase domain.

The polypeptide is Inactive cap-specific mRNA (nucleoside-2'-O-)-methyltransferase 1B (Caenorhabditis briggsae).